The sequence spans 692 residues: Methionine--tRNA ligase (692 aa).

Positions 12–22 match the 'HIGH' region motif; sequence PYANGSFHIGH. Zn(2+) contacts are provided by Cys-143, Cys-146, Cys-156, and Cys-159. The 'KMSKS' region motif lies at 341–345; the sequence is KMSKS. Residue Lys-344 coordinates ATP. The 107-residue stretch at 586–692 folds into the tRNA-binding domain; that stretch reads DFAKIDLRIA…PGAQPGMRVR (107 aa).

Belongs to the class-I aminoacyl-tRNA synthetase family. MetG type 1 subfamily. As to quaternary structure, homodimer. Zn(2+) serves as cofactor.

Its subcellular location is the cytoplasm. It catalyses the reaction tRNA(Met) + L-methionine + ATP = L-methionyl-tRNA(Met) + AMP + diphosphate. Is required not only for elongation of protein synthesis but also for the initiation of all mRNA translation through initiator tRNA(fMet) aminoacylation. The chain is Methionine--tRNA ligase from Bordetella parapertussis (strain 12822 / ATCC BAA-587 / NCTC 13253).